Here is a 400-residue protein sequence, read N- to C-terminus: MAPVGSKRGVLERLNAGEVVIGDGGFVFALEKRGYVKAGPWTPEAAAEHPEAVRQLHREFLRAGSNVMQTFTFYASDDKLENRGNKLSFTGQQINEAACDLAREVANEGDALVAGGVSQTPSYLSCKSEEEVKKTFKKQLDVFIKKNVDLLIAEYFEHVEEAEWAVQVLKATGKPVAATLCIGPDGDMHGVIPGECAVRLVKAGADIVGVNCHFDPLTCVKTVAMMKAAVEKAGLKAHYMTQPLAYHTPDCSCQGFIDLPEFPFALEPRILTRWEMQQYAREAYKAGIRYIGGCCGFEPYHIRAVAEELSAERGFLPEASQKHGLWGSGLEMHTKPWVRARARRDYWEKLKPASGRPLCPSMSTPDGWGVTRGHAALMQQKEATTAEQLRPLFQQADAKH.

In terms of domain architecture, Hcy-binding spans 8-309 (RGVLERLNAG…YHIRAVAEEL (302 aa)). 3 residues coordinate Zn(2+): Cys-212, Cys-294, and Cys-295.

As to quaternary structure, homotetramer. Requires Zn(2+) as cofactor.

Its subcellular location is the cytoplasm. It carries out the reaction L-homocysteine + glycine betaine = N,N-dimethylglycine + L-methionine. It functions in the pathway amine and polyamine degradation; betaine degradation; sarcosine from betaine: step 1/2. It participates in amino-acid biosynthesis; L-methionine biosynthesis via de novo pathway; L-methionine from L-homocysteine (BhmT route): step 1/1. Functionally, involved in the regulation of homocysteine metabolism. Converts betaine and homocysteine to dimethylglycine and methionine, respectively. This reaction is also required for the irreversible oxidation of choline. The protein is Betaine--homocysteine S-methyltransferase 1 (bhmt) of Danio rerio (Zebrafish).